Here is a 903-residue protein sequence, read N- to C-terminus: Calcium-activated chloride channel regulator 1 (903 aa).

Residues 1-21 (MVPRLTVILFLTLHLLPGMKS) form the signal peptide. The metalloprotease domain stretch occupies residues 45–199 (DEKLIQNIKE…HITGTNVIVK (155 aa)). H155 provides a ligand contact to Zn(2+). E156 is a catalytic residue. H159 and D166 together coordinate Zn(2+). Residues 308 to 476 (VVCLVLDKSG…NGLTNAFSRI (169 aa)) form the VWFA domain. 4 N-linked (GlcNAc...) asparagine glycosylation sites follow: N360, N372, N504, and N842. Residues 883 to 903 (GTKISAINLAIFALAMILSIV) form a helical membrane-spanning segment.

Belongs to the CLCR family. Post-translationally, glycosylated. The 125-kDa product is autoproteolytically processed by the metalloprotease domain and yields to two cell-surface-associated subunits, a 90-kDa protein and a group of 37- to 41-kDa proteins. The cleavage is necessary for calcium-activated chloride channel (CaCC) activation activity. As to expression, trachea.

It localises to the apical cell membrane. In terms of biological role, may be involved in mediating calcium-activated chloride conductance. May play critical roles in goblet cell metaplasia, mucus hypersecretion, cystic fibrosis and AHR. May be involved in the regulation of mucus production and/or secretion by goblet cells. Involved in the regulation of tissue inflammation in the innate immune response. May play a role as a tumor suppressor. Induces MUC5AC. The polypeptide is Calcium-activated chloride channel regulator 1 (Bos taurus (Bovine)).